Here is a 216-residue protein sequence, read N- to C-terminus: Adenylate kinase (216 aa).

Residue 10-15 (GAGKGT) coordinates ATP. An NMP region spans residues 30-59 (STGDIFRANIKEKTPLGIEAKRYIDNGQLV). AMP-binding positions include T31, R36, 57–59 (QLV), 85–88 (GFPR), and Q92. Positions 126 to 163 (GRRVCTSCGASYHIRFNPPKIEGKCDICDNELIQRKDD) are LID. R127 contributes to the ATP binding site. Positions 130 and 133 each coordinate Zn(2+). ATP is bound at residue 136–137 (SY). Zn(2+) is bound by residues C150 and C153. R160 and R171 together coordinate AMP. Position 199 (E199) interacts with ATP.

This sequence belongs to the adenylate kinase family. Monomer.

The protein resides in the cytoplasm. The enzyme catalyses AMP + ATP = 2 ADP. It participates in purine metabolism; AMP biosynthesis via salvage pathway; AMP from ADP: step 1/1. Catalyzes the reversible transfer of the terminal phosphate group between ATP and AMP. Plays an important role in cellular energy homeostasis and in adenine nucleotide metabolism. The polypeptide is Adenylate kinase (Clostridium botulinum (strain Langeland / NCTC 10281 / Type F)).